Reading from the N-terminus, the 480-residue chain is tRNA-2-methylthio-N(6)-dimethylallyladenosine synthase (480 aa).

An MTTase N-terminal domain is found at 29 to 145 (GSFWIQTFGC…LEALLTQVDN (117 aa)). Positions 38, 74, 108, 180, 184, and 187 each coordinate [4Fe-4S] cluster. Positions 166–403 (RDSTICAWVN…NALVERVALQ (238 aa)) constitute a Radical SAM core domain. Positions 406–474 (SRYSGKVEQV…AFSLSGTPCD (69 aa)) constitute a TRAM domain.

Belongs to the methylthiotransferase family. MiaB subfamily. As to quaternary structure, monomer. [4Fe-4S] cluster is required as a cofactor.

It localises to the cytoplasm. The catalysed reaction is N(6)-dimethylallyladenosine(37) in tRNA + (sulfur carrier)-SH + AH2 + 2 S-adenosyl-L-methionine = 2-methylsulfanyl-N(6)-dimethylallyladenosine(37) in tRNA + (sulfur carrier)-H + 5'-deoxyadenosine + L-methionine + A + S-adenosyl-L-homocysteine + 2 H(+). Catalyzes the methylthiolation of N6-(dimethylallyl)adenosine (i(6)A), leading to the formation of 2-methylthio-N6-(dimethylallyl)adenosine (ms(2)i(6)A) at position 37 in tRNAs that read codons beginning with uridine. This is tRNA-2-methylthio-N(6)-dimethylallyladenosine synthase from Prochlorococcus marinus (strain MIT 9303).